The sequence spans 685 residues: Frizzled-8 (685 aa).

The N-terminal stretch at 1–27 is a signal peptide; it reads MEWGYLLEVTSLLAALAVLQRSSGAAA. Residues 28 to 272 are Extracellular-facing; it reads ASAKELACQE…NPFFSQDERA (245 aa). One can recognise an FZ domain in the interval 30–151; it reads AKELACQEIT…GNPDTLCMDY (122 aa). Intrachain disulfides connect C35/C96, C43/C89, C80/C118, C107/C148, and C111/C135. N-linked (GlcNAc...) asparagine glycosylation occurs at N49. 71-78 provides a ligand contact to hexadecanoate; that stretch reads QFWPLVEI. The segment at 95 to 100 is wnt-binding; sequence ICLEDY. A wnt-binding region spans residues 147–152; that stretch reads LCMDYN. A glycan (N-linked (GlcNAc...) asparagine) is linked at N152. The interval 155–223 is disordered; it reads DLTTAAPSPP…KARPPGGGAA (69 aa). Positions 161–176 are enriched in pro residues; sequence PSPPRRLPPPPPPGEQ. Low complexity-rich tracts occupy residues 177–187 and 200–223; these read PPSGSGHSRPP and GSGD…GGAA. Residues 273–293 form a helical membrane-spanning segment; that stretch reads FTVFWIGLWSVLCFVSTFATV. Over 294–309 the chain is Cytoplasmic; that stretch reads STFLIDMERFKYPERP. The helical transmembrane segment at 310 to 330 threads the bilayer; it reads IIFLSACYLFVSVGYLVRLVA. The Extracellular segment spans residues 331–394; sequence GHEKVACSGG…RYETTGPALC (64 aa). The helical transmembrane segment at 395–415 threads the bilayer; that stretch reads TVVFLLVYFFGMASSIWWVIL. Over 416-437 the chain is Cytoplasmic; it reads SLTWFLAAGMKWGNEAIAGYSQ. Residues 438 to 458 form a helical membrane-spanning segment; that stretch reads YFHLAAWLVPSVKSIAVLALS. Over 459–481 the chain is Extracellular; the sequence is SVDGDPVAGICYVGNQSLDNLRG. N-linked (GlcNAc...) asparagine glycosylation is present at N473. A helical transmembrane segment spans residues 482 to 502; that stretch reads FVLAPLVIYLFIGTMFLLAGF. The Cytoplasmic segment spans residues 503 to 530; the sequence is VSLFRIRSVIKQQGGPTKTHKLEKLMIR. Residues 531–551 traverse the membrane as a helical segment; the sequence is LGLFTVLYTVPAAVVVACLFY. Topologically, residues 552-582 are extracellular; sequence EQHNRPRWEATHNCPCLRDLQPDQARRPDYA. Residues 583–603 form a helical membrane-spanning segment; sequence VFMLKYFMCLVVGITSGVWVW. Topologically, residues 604–685 are cytoplasmic; sequence SGKTLESWRA…YPKQMPLSQV (82 aa). Residues 606 to 611 carry the Lys-Thr-X-X-X-Trp motif, mediates interaction with the PDZ domain of Dvl family members motif; it reads KTLESW. Residues 631–655 show a composition bias toward gly residues; that stretch reads AGGSGPGGSGPGPGGGGGHGGGGGS. The tract at residues 631 to 656 is disordered; it reads AGGSGPGGSGPGPGGGGGHGGGGGSL. The PDZ-binding motif lies at 683 to 685; sequence SQV.

It belongs to the G-protein coupled receptor Fz/Smo family. As to quaternary structure, component of a Wnt-signaling complex that contains a WNT protein, a FZD protein and LRP5 or LRP6. Interacts directly with LRP5 or LRP6; the interaction is promoted by Wnt-binding and signaling and inhibited by DKK1. Interacts (via the PDZ-binding motif) with GPOC (via its PDZ domain). Interacts with RSPO1 and RSPO3. Interacts with glypican GPC3. In terms of processing, ubiquitinated by ZNRF3, leading to its degradation by the proteasome. In terms of tissue distribution, expressed in chondrocytes.

The protein localises to the membrane. It is found in the golgi apparatus. The protein resides in the cell membrane. Its function is as follows. Receptor for Wnt proteins. Component of the Wnt-Fzd-LRP5-LRP6 complex that triggers beta-catenin signaling through inducing aggregation of receptor-ligand complexes into ribosome-sized signalosomes. The beta-catenin canonical signaling pathway leads to the activation of disheveled proteins, inhibition of GSK-3 kinase, nuclear accumulation of beta-catenin and activation of Wnt target genes. A second signaling pathway involving PKC and calcium fluxes has been seen for some family members, but it is not yet clear if it represents a distinct pathway or if it can be integrated in the canonical pathway, as PKC seems to be required for Wnt-mediated inactivation of GSK-3 kinase. Both pathways seem to involve interactions with G-proteins. May be involved in transduction and intercellular transmission of polarity information during tissue morphogenesis and/or in differentiated tissues. Coreceptor along with RYK of Wnt proteins, such as WNT1. The sequence is that of Frizzled-8 (Fzd8) from Mus musculus (Mouse).